Consider the following 390-residue polypeptide: Succinate--CoA ligase [ADP-forming] subunit beta (390 aa).

The region spanning 9–248 is the ATP-grasp domain; that stretch reads KEILRRHKAN…ITEEDPLEVQ (240 aa). ATP contacts are provided by residues lysine 50, 57–59, glutamate 103, isoleucine 106, and glutamate 111; that span reads GRG. Residues asparagine 203 and aspartate 217 each coordinate Mg(2+). Substrate-binding positions include asparagine 268 and 325–327; that span reads GIV.

This sequence belongs to the succinate/malate CoA ligase beta subunit family. As to quaternary structure, heterotetramer of two alpha and two beta subunits. The cofactor is Mg(2+).

It carries out the reaction succinate + ATP + CoA = succinyl-CoA + ADP + phosphate. The enzyme catalyses GTP + succinate + CoA = succinyl-CoA + GDP + phosphate. It functions in the pathway carbohydrate metabolism; tricarboxylic acid cycle; succinate from succinyl-CoA (ligase route): step 1/1. Succinyl-CoA synthetase functions in the citric acid cycle (TCA), coupling the hydrolysis of succinyl-CoA to the synthesis of either ATP or GTP and thus represents the only step of substrate-level phosphorylation in the TCA. The beta subunit provides nucleotide specificity of the enzyme and binds the substrate succinate, while the binding sites for coenzyme A and phosphate are found in the alpha subunit. In Leptospira borgpetersenii serovar Hardjo-bovis (strain JB197), this protein is Succinate--CoA ligase [ADP-forming] subunit beta.